The sequence spans 271 residues: Extent of cell elongation protein 1 (271 aa).

The N-terminal stretch at 1 to 18 is a signal peptide; it reads MKFSKIACATVFALSSQA. A helical transmembrane segment spans residues 62 to 82; that stretch reads SIIGIIMGILGNIPQVIQIIM.

Polymerizes in solution to form membrane pores. In terms of processing, cleavage by KEX2 generates 8 peptides ECE1-I to ECE1-VIII, all terminating in Lys-Arg. Only peptide ECE1-III, called candidalysin, shows toxin activity.

It is found in the secreted. The protein localises to the host cell membrane. Functionally, secreted protein cleaved by KEX2 in 8 similar peptides (ECE1-I to ECE1-VIII). Stimulates biofilm formation. Acts as a cytolytic peptide toxin that directly damages host epithelial membranes, triggers a danger response signaling pathway and activates epithelial immunity. Polymerizes in solution to form membrane pores to damage epithelial cells. Induces calcium influx, oxidative stress, mitochondrial dysfunction and ATP depletion in host cells, leading to epithelial necrosis. Serves as a danger signal that potentiates the immune response, and more specifically IL-17 response. Induces cytokine/chemokine secretion by host (especially CCL2/3/4, CXCL1 and S100A8), neutrophil recruitment, and promotes mortality in zebrafish and murine models of systemic fungal infection. Mediates distinct epithelial inflammatory responses through p38, EGFR-ERK and TREM-1/DAP12 pathways. Acts as one of the hypha-derived drivers of NLRP3 inflammasome responses in primary macrophages and thus contributes to the capacity to induce maturation and secretion of IL-1beta from primary macrophages. Stimulates mast cells by mediating cross-talk between signaling pathways activated by the dectin-1 receptor and MAPKs. Enables escape via the gasdermin-mediated pyroptosis, as well as a cell lysis pathway associated with macrophage extracellular trap formation termed ETosis. Acts as the main hemolytic factor of C.albicans. As an exotoxine, also promotes alcohol-associated liver disease or oral carcinogenesis. The chain is Extent of cell elongation protein 1 from Candida albicans (strain SC5314 / ATCC MYA-2876) (Yeast).